The sequence spans 208 residues: ATP phosphoribosyltransferase (208 aa).

Belongs to the ATP phosphoribosyltransferase family. Short subfamily. As to quaternary structure, heteromultimer composed of HisG and HisZ subunits.

Its subcellular location is the cytoplasm. The catalysed reaction is 1-(5-phospho-beta-D-ribosyl)-ATP + diphosphate = 5-phospho-alpha-D-ribose 1-diphosphate + ATP. It participates in amino-acid biosynthesis; L-histidine biosynthesis; L-histidine from 5-phospho-alpha-D-ribose 1-diphosphate: step 1/9. Functionally, catalyzes the condensation of ATP and 5-phosphoribose 1-diphosphate to form N'-(5'-phosphoribosyl)-ATP (PR-ATP). Has a crucial role in the pathway because the rate of histidine biosynthesis seems to be controlled primarily by regulation of HisG enzymatic activity. This Thermotoga petrophila (strain ATCC BAA-488 / DSM 13995 / JCM 10881 / RKU-1) protein is ATP phosphoribosyltransferase.